Here is a 303-residue protein sequence, read N- to C-terminus: Signal recognition particle receptor FtsY (303 aa).

GTP is bound by residues Gly108–Thr115, Asp190–Arg194, and Thr254–Asp257.

It belongs to the GTP-binding SRP family. FtsY subfamily. As to quaternary structure, part of the signal recognition particle protein translocation system, which is composed of SRP and FtsY. SRP is a ribonucleoprotein composed of Ffh and a 4.5S RNA molecule.

The protein localises to the cell inner membrane. It is found in the cytoplasm. It carries out the reaction GTP + H2O = GDP + phosphate + H(+). Functionally, involved in targeting and insertion of nascent membrane proteins into the cytoplasmic membrane. Acts as a receptor for the complex formed by the signal recognition particle (SRP) and the ribosome-nascent chain (RNC). Interaction with SRP-RNC leads to the transfer of the RNC complex to the Sec translocase for insertion into the membrane, the hydrolysis of GTP by both Ffh and FtsY, and the dissociation of the SRP-FtsY complex into the individual components. The protein is Signal recognition particle receptor FtsY of Rickettsia felis (strain ATCC VR-1525 / URRWXCal2) (Rickettsia azadi).